Reading from the N-terminus, the 737-residue chain is NAD-dependent protein deacetylase sirtuin-1 (737 aa).

Over residues 1 to 28 (MADEVALALQAAGSPSAAAAMEAASQPA) the composition is skewed to low complexity. 2 disordered regions span residues 1 to 56 (MADE…AVAP) and 75 to 125 (EAAG…EAAA). Ala-2 bears the N-acetylalanine mark. The interaction with CLOCK stretch occupies residues 2–131 (ADEVALALQA…EAAAAAAAAA (130 aa)). The tract at residues 2–268 (ADEVALALQA…SCGIPDFRSR (267 aa)) is interaction with H1-4. Phosphoserine occurs at positions 14 and 25. A Nuclear localization signal motif is present at residues 32–39 (LRKRPRRD). Ser-46 is modified (phosphoserine; by MAPK8). 2 stretches are compositionally biased toward low complexity: residues 46–56 (SPGEPSAAVAP) and 75–94 (EAAG…AVAG). Positions 111-123 (DFDDDEGEEEDEA) are enriched in acidic residues. Residues 135–533 (RDNLLLTDGL…LHISEDSSSP (399 aa)) form an interaction with CCAR2 region. A Nuclear export signal motif is present at residues 138 to 145 (LLLTDGLL). 4 positions are modified to phosphoserine: Ser-151, Ser-154, Ser-164, and Ser-165. A disordered region spans residues 152 to 171 (CESDDDDRTSHASSSDWTPR). A Nuclear localization signal motif is present at residues 223-230 (PPKRKKRK). Residues 228 to 488 (KRKDINTIED…NELCHRLGGE (261 aa)) enclose the Deacetylase sirtuin-type domain. Lys-230 carries the N6-acetyllysine modification. The tract at residues 248–251 (IIVL) is required for interaction with the sumoylated form of CCAR2. NAD(+) is bound by residues 253 to 272 (GAGV…DGIY) and 337 to 340 (QNID). The Proton acceptor role is filled by His-355. Zn(2+) contacts are provided by Cys-363 and Cys-366. Lys-369 is subject to N6-acetyllysine. Zn(2+) contacts are provided by Cys-387 and Cys-390. S-nitrosocysteine occurs at positions 387 and 390. Lys-422 carries the N6-acetyllysine modification. The short motif at 425 to 431 (VDLLIVI) is the Nuclear export signal element. NAD(+)-binding positions include 432–434 (GSS), 457–459 (NRE), and Cys-474. Lys-505 carries the post-translational modification N6-acetyllysine. A disordered region spans residues 514 to 539 (VHLSELPPTPLHISEDSSSPERTVPQ). A Phosphothreonine; by DYRK1A, DYRK3 and MAPK8 modification is found at Thr-522. The residue at position 527 (Ser-527) is a Phosphoserine. Over residues 529–539 (DSSSPERTVPQ) the composition is skewed to polar residues. Phosphothreonine is present on Thr-536. Lys-600 is subject to N6-acetyllysine. Phosphoserine; by CaMK2 occurs at positions 649 and 651. Positions 653–713 (DDVLSSSSCG…GSGFGADGGD (61 aa)) are disordered. Residues 656 to 676 (LSSSSCGSNSDSGTCQSPSLE) are compositionally biased toward low complexity. Residues 677 to 697 (EPLEDESEIEEFYNGLEDDTE) show a composition bias toward acidic residues. A Phosphoserine modification is found at Ser-737.

It belongs to the sirtuin family. Class I subfamily. Interacts with XBP1 isoform 2. Found in a complex with PCAF and MYOD1 Component of the eNoSC complex, composed of SIRT1, SUV39H1 and RRP8. Interacts with HES1, HEY2 and PML. Interacts with RPS19BP1/AROS. Interacts with CCAR2 (via N-terminus); the interaction disrupts the interaction between SIRT1 and p53/TP53. Interacts with SETD7; the interaction induces the dissociation of SIRT1 from p53/TP53 and increases p53/TP53 activity. Interacts with MYCN, NR1I2, CREBZF, TSC2, TLE1, FOS, JUN, NR0B2, PPARG, NCOR, IRS1, IRS2 and NMNAT1. Interacts with HNF1A; the interaction occurs under nutrient restriction. Interacts with SUZ12; the interaction mediates the association with the PRC4 histone methylation complex which is specific as an association with PCR2 and PCR3 complex variants is not found. Interacts with FOXO1; the interaction deacetylates FOXO1, enhances its DNA-binding ability and increases its transcriptional activity. Interacts with BCL6; leads to a epigenetic repression of specific target genes. Interacts with CLOCK, BMAL1 and PER2. Interacts with PPARA; the interaction seems to be modulated by NAD(+) levels. Interacts with NR1H3 and this interaction is inhibited in the presence of CCAR2. Interacts with CHEK2 and p53/TP53. Exhibits a preferential interaction with sumoylated CCAR2 over its unmodified form. Interacts with PACS2. Interacts with SIRT7. Interacts with PUS7. Interacts with TULP3. Interacts with MORN3; the interaction enhances the ubiquitination of p53/TP53. The cofactor is Zn(2+). Methylated on multiple lysine residues; methylation is enhanced after DNA damage and is dispensable for deacetylase activity toward p53/TP53. Post-translationally, phosphorylated. Phosphorylated by STK4/MST1, resulting in inhibition of SIRT1-mediated p53/TP53 deacetylation. Phosphorylation by MAPK8/JNK1 at Ser-46 and Thr-522 leads to increased nuclear localization and enzymatic activity. Phosphorylation at Thr-522 by DYRK1A and DYRK3 activates deacetylase activity and promotes cell survival. Phosphorylation by mammalian target of rapamycin complex 1 (mTORC1) at Ser-46 inhibits deacetylation activity. Phosphorylated by CaMK2, leading to increased p53/TP53 and NF-kappa-B p65/RELA deacetylation activity. In terms of processing, proteolytically cleaved by cathepsin B upon TNF-alpha treatment to yield catalytic inactive but stable SirtT1 75 kDa fragment (75SirT1). S-nitrosylated by GAPDH, leading to inhibit the NAD-dependent protein deacetylase activity. Post-translationally, acetylated at various Lys residues. Deacetylated via an autocatalytic mechanism. Autodeacetylation at Lys-230 promotes its protein deacetylase activity. In terms of processing, ubiquitinated; leading to degradation. Deubiquitinated by USP22; leading to stabilization. Widely expressed. Weakly expressed in liver and skeletal muscle.

Its subcellular location is the nucleus. It is found in the PML body. The protein localises to the cytoplasm. It localises to the mitochondrion. It carries out the reaction N(6)-acetyl-L-lysyl-[protein] + NAD(+) + H2O = 2''-O-acetyl-ADP-D-ribose + nicotinamide + L-lysyl-[protein]. It catalyses the reaction N(6)-propanoyl-L-lysyl-[protein] + NAD(+) + H2O = 3''-O-propanoyl-ADP-D-ribose + nicotinamide + L-lysyl-[protein]. The catalysed reaction is N(6)-(2E)-butenoyl-L-lysyl-[protein] + NAD(+) + H2O = 2''-O-(2E)-but-2-enoyl-ADP-D-ribose + nicotinamide + L-lysyl-[protein]. The enzyme catalyses N(6)-[(S)-lactoyl]-L-lysyl-[protein] + NAD(+) + H2O = 2''-O-(S)-lactoyl-ADP-D-ribose + nicotinamide + L-lysyl-[protein]. Activated by resveratrol (3,5,4'-trihydroxy-trans-stilbene), butein (3,4,2',4'-tetrahydroxychalcone), piceatannol (3,5,3',4'-tetrahydroxy-trans-stilbene), Isoliquiritigenin (4,2',4'-trihydroxychalcone), fisetin (3,7,3',4'-tetrahydroxyflavone) and quercetin (3,5,7,3',4'-pentahydroxyflavone). MAPK8/JNK1 and RPS19BP1/AROS act as positive regulators of deacetylation activity. Inhibited by nicotinamide. Negatively regulated by CCAR2. NAD-dependent protein deacetylase that links transcriptional regulation directly to intracellular energetics and participates in the coordination of several separated cellular functions such as cell cycle, response to DNA damage, metabolism, apoptosis and autophagy. Can modulate chromatin function through deacetylation of histones and can promote alterations in the methylation of histones and DNA, leading to transcriptional repression. Deacetylates a broad range of transcription factors and coregulators, thereby regulating target gene expression positively and negatively. Serves as a sensor of the cytosolic ratio of NAD(+)/NADH which is altered by glucose deprivation and metabolic changes associated with caloric restriction. Is essential in skeletal muscle cell differentiation and in response to low nutrients mediates the inhibitory effect on skeletal myoblast differentiation which also involves 5'-AMP-activated protein kinase (AMPK) and nicotinamide phosphoribosyltransferase (NAMPT). Component of the eNoSC (energy-dependent nucleolar silencing) complex, a complex that mediates silencing of rDNA in response to intracellular energy status and acts by recruiting histone-modifying enzymes. The eNoSC complex is able to sense the energy status of cell: upon glucose starvation, elevation of NAD(+)/NADP(+) ratio activates SIRT1, leading to histone H3 deacetylation followed by dimethylation of H3 at 'Lys-9' (H3K9me2) by SUV39H1 and the formation of silent chromatin in the rDNA locus. Deacetylates 'Lys-266' of SUV39H1, leading to its activation. Inhibits skeletal muscle differentiation by deacetylating PCAF and MYOD1. Deacetylates H2A and 'Lys-26' of H1-4. Deacetylates 'Lys-16' of histone H4 (in vitro). Involved in NR0B2/SHP corepression function through chromatin remodeling: Recruited to LRH1 target gene promoters by NR0B2/SHP thereby stimulating histone H3 and H4 deacetylation leading to transcriptional repression. Proposed to contribute to genomic integrity via positive regulation of telomere length; however, reports on localization to pericentromeric heterochromatin are conflicting. Proposed to play a role in constitutive heterochromatin (CH) formation and/or maintenance through regulation of the available pool of nuclear SUV39H1. Upon oxidative/metabolic stress decreases SUV39H1 degradation by inhibiting SUV39H1 polyubiquitination by MDM2. This increase in SUV39H1 levels enhances SUV39H1 turnover in CH, which in turn seems to accelerate renewal of the heterochromatin which correlates with greater genomic integrity during stress response. Deacetylates 'Lys-382' of p53/TP53 and impairs its ability to induce transcription-dependent proapoptotic program and modulate cell senescence. Deacetylates TAF1B and thereby represses rDNA transcription by the RNA polymerase I. Deacetylates MYC, promotes the association of MYC with MAX and decreases MYC stability leading to compromised transformational capability. Deacetylates FOXO3 in response to oxidative stress thereby increasing its ability to induce cell cycle arrest and resistance to oxidative stress but inhibiting FOXO3-mediated induction of apoptosis transcriptional activity; also leading to FOXO3 ubiquitination and protesomal degradation. Appears to have a similar effect on MLLT7/FOXO4 in regulation of transcriptional activity and apoptosis. Deacetylates DNMT1; thereby impairs DNMT1 methyltransferase-independent transcription repressor activity, modulates DNMT1 cell cycle regulatory function and DNMT1-mediated gene silencing. Deacetylates RELA/NF-kappa-B p65 thereby inhibiting its transactivating potential and augments apoptosis in response to TNF-alpha. Deacetylates HIF1A, KAT5/TIP60, RB1 and HIC1. Deacetylates FOXO1, which increases its DNA binding ability and enhances its transcriptional activity leading to increased gluconeogenesis in liver. Inhibits E2F1 transcriptional activity and apoptotic function, possibly by deacetylation. Involved in HES1- and HEY2-mediated transcriptional repression. In cooperation with MYCN seems to be involved in transcriptional repression of DUSP6/MAPK3 leading to MYCN stabilization by phosphorylation at 'Ser-62'. Deacetylates MEF2D. Required for antagonist-mediated transcription suppression of AR-dependent genes which may be linked to local deacetylation of histone H3. Represses HNF1A-mediated transcription. Required for the repression of ESRRG by CREBZF. Deacetylates NR1H3 and NR1H2 and deacetylation of NR1H3 at 'Lys-434' positively regulates transcription of NR1H3:RXR target genes, promotes NR1H3 proteasomal degradation and results in cholesterol efflux; a promoter clearing mechanism after reach round of transcription is proposed. Involved in lipid metabolism: deacetylates LPIN1, thereby inhibiting diacylglycerol synthesis. Implicated in regulation of adipogenesis and fat mobilization in white adipocytes by repression of PPARG which probably involves association with NCOR1 and SMRT/NCOR2. Deacetylates p300/EP300 and PRMT1. Deacetylates ACSS2 leading to its activation, and HMGCS1 deacetylation. Involved in liver and muscle metabolism. Through deacetylation and activation of PPARGC1A is required to activate fatty acid oxidation in skeletal muscle under low-glucose conditions and is involved in glucose homeostasis. Involved in regulation of PPARA and fatty acid beta-oxidation in liver. Involved in positive regulation of insulin secretion in pancreatic beta cells in response to glucose; the function seems to imply transcriptional repression of UCP2. Proposed to deacetylate IRS2 thereby facilitating its insulin-induced tyrosine phosphorylation. Deacetylates SREBF1 isoform SREBP-1C thereby decreasing its stability and transactivation in lipogenic gene expression. Involved in DNA damage response by repressing genes which are involved in DNA repair, such as XPC and TP73, deacetylating XRCC6/Ku70, and facilitating recruitment of additional factors to sites of damaged DNA, such as SIRT1-deacetylated NBN can recruit ATM to initiate DNA repair and SIRT1-deacetylated XPA interacts with RPA2. Also involved in DNA repair of DNA double-strand breaks by homologous recombination and specifically single-strand annealing independently of XRCC6/Ku70 and NBN. Promotes DNA double-strand breaks by mediating deacetylation of SIRT6. Transcriptional suppression of XPC probably involves an E2F4:RBL2 suppressor complex and protein kinase B (AKT) signaling. Transcriptional suppression of TP73 probably involves E2F4 and PCAF. Deacetylates WRN thereby regulating its helicase and exonuclease activities and regulates WRN nuclear translocation in response to DNA damage. Deacetylates APEX1 at 'Lys-6' and 'Lys-7' and stimulates cellular AP endonuclease activity by promoting the association of APEX1 to XRCC1. Catalyzes deacetylation of ERCC4/XPF, thereby impairing interaction with ERCC1 and nucleotide excision repair (NER). Increases p53/TP53-mediated transcription-independent apoptosis by blocking nuclear translocation of cytoplasmic p53/TP53 and probably redirecting it to mitochondria. Deacetylates XRCC6/Ku70 at 'Lys-537' and 'Lys-540' causing it to sequester BAX away from mitochondria thereby inhibiting stress-induced apoptosis. Is involved in autophagy, presumably by deacetylating ATG5, ATG7 and MAP1LC3B/ATG8. Deacetylates AKT1 which leads to enhanced binding of AKT1 and PDK1 to PIP3 and promotes their activation. Proposed to play role in regulation of STK11/LBK1-dependent AMPK signaling pathways implicated in cellular senescence which seems to involve the regulation of the acetylation status of STK11/LBK1. Can deacetylate STK11/LBK1 and thereby increase its activity, cytoplasmic localization and association with STRAD; however, the relevance of such activity in normal cells is unclear. In endothelial cells is shown to inhibit STK11/LBK1 activity and to promote its degradation. Deacetylates SMAD7 at 'Lys-64' and 'Lys-70' thereby promoting its degradation. Deacetylates CIITA and augments its MHC class II transactivation and contributes to its stability. Deacetylates MECOM/EVI1. Deacetylates PML at 'Lys-487' and this deacetylation promotes PML control of PER2 nuclear localization. During the neurogenic transition, represses selective NOTCH1-target genes through histone deacetylation in a BCL6-dependent manner and leading to neuronal differentiation. Regulates the circadian expression of several core clock genes, including BMAL1, RORC, PER2 and CRY1 and plays a critical role in maintaining a controlled rhythmicity in histone acetylation, thereby contributing to circadian chromatin remodeling. Deacetylates BMAL1 and histones at the circadian gene promoters in order to facilitate repression by inhibitory components of the circadian oscillator. Deacetylates PER2, facilitating its ubiquitination and degradation by the proteasome. Protects cardiomyocytes against palmitate-induced apoptosis. Deacetylates XBP1 isoform 2; deacetylation decreases protein stability of XBP1 isoform 2 and inhibits its transcriptional activity. Deacetylates PCK1 and directs its activity toward phosphoenolpyruvate production promoting gluconeogenesis. Involved in the CCAR2-mediated regulation of PCK1 and NR1D1. Deacetylates CTNB1 at 'Lys-49'. In POMC (pro-opiomelanocortin) neurons, required for leptin-induced activation of PI3K signaling. Deacetylates SOX9; promoting SOX9 nuclear localization and transactivation activity. Involved in the regulation of centrosome duplication: Deacetylates CENATAC in G1 phase, allowing for SASS6 accumulation on the centrosome and subsequent procentriole assembly. Deacetylates NDC80/HEC1. In addition to protein deacetylase activity, also acts as a protein-lysine deacylase by mediating protein delactylation, depropionylation and decrotonylation. Mediates depropionylation of Osterix (SP7). Catalyzes decrotonylation of histones; it however does not represent a major histone decrotonylase. Mediates protein delactylation of TEAD1 and YAP1. Its function is as follows. Deacetylates 'Lys-382' of p53/TP53, however with lower activity than isoform 1. In combination, the two isoforms exert an additive effect. Isoform 2 regulates p53/TP53 expression and cellular stress response and is in turn repressed by p53/TP53 presenting a SIRT1 isoform-dependent auto-regulatory loop. In terms of biological role, catalytically inactive 75SirT1 may be involved in regulation of apoptosis. May be involved in protecting chondrocytes from apoptotic death by associating with cytochrome C and interfering with apoptosome assembly. The sequence is that of NAD-dependent protein deacetylase sirtuin-1 (Sirt1) from Mus musculus (Mouse).